The primary structure comprises 229 residues: Flagellar calcium-binding protein TB-1.7G (229 aa).

The tract at residues 1–25 is disordered; that stretch reads GSKNASNPKDGAASKGGKDGKTTAD. The segment covering 16–25 has biased composition (basic and acidic residues); sequence GGKDGKTTAD. 4 consecutive EF-hand domains span residues 44 to 79, 80 to 115, 126 to 161, and 163 to 198; these read ESKSRRIELFKQFDTNGTGKLGFREVLDGCYGILKL, DEFTTHLPDIVQRAFDKAKDLGNKVKGVGEEDLVEF, YDIFELTVMFDTMDKDGSLLLELQEFKEALPKLKEW, and VDITDATTVFNEIDTNGSGVVTFDEFSCWAVTKKLQ. The Ca(2+) site is built by Asp-57, Asn-59, Thr-61, Lys-63, and Glu-68. Residues Asp-139, Asp-141, Ser-143, Glu-150, Asp-176, Asn-178, Ser-180, and Glu-187 each contribute to the Ca(2+) site. The interval 202–229 is disordered; the sequence is DPDDEENGANEGDGANAGDGVPAAEGSA. Positions 210–221 are enriched in low complexity; that stretch reads ANEGDGANAGDG.

It belongs to the calflagin family.

The protein localises to the cell projection. It localises to the cilium. It is found in the flagellum. In terms of biological role, may contribute to the rapid motility of the trypanosomes, playing a role either in flagellar structure or in calcium metabolism. Could alternate between a GDP-bound inactive form to a calcium/GTP-bound active form. This chain is Flagellar calcium-binding protein TB-1.7G, found in Trypanosoma brucei brucei.